The chain runs to 304 residues: MDEGDLEAIVRGYSGSGDAFSGESSGTFSPSFCLPMETSSFYEPEMETSGLDELGELYKPFYPFSTQTILTSSVSLPEDSKPFRDDKKQRSHGCLLSNGSRADHIRISESKSKKSKKNQQKRVVEQVKEENLLSDAWAWRKYGQKPIKGSPYPRSYYRCSSSKGCLARKQVERNPQNPEKFTITYTNEHNHELPTRRNSLAGSTRAKTSQPKPTLTKKSEKEVVSSPTSNPMIPSADESSVAVQEMSVAETSTHQAAGAIEGRRLSNGLPSDLMSGSGTFPSFTGDFDELLNSQEFFSGYLWNY.

2 disordered regions span residues Leu-76–Leu-96 and Tyr-185–Ala-236. Positions Glu-78–Lys-88 are enriched in basic and acidic residues. Residues Lys-128–Pro-194 constitute a DNA-binding region (WRKY). Polar residues-rich tracts occupy residues Arg-196–Pro-213 and Ser-225–Ala-236.

This sequence belongs to the WRKY group II-e family.

The protein localises to the nucleus. Functionally, transcription factor involved in the expression of defense genes in innate immune response of plants. Interacts specifically with the W box (5'-(T)TGAC[CT]-3'), a frequently occurring elicitor-responsive cis-acting element. Activates WRKY 22, SIRK and its own promoters. The chain is Probable WRKY transcription factor 29 (WRKY29) from Arabidopsis thaliana (Mouse-ear cress).